Consider the following 1216-residue polypeptide: Regulator of telomere elongation helicase 1 (1216 aa).

A Helicase ATP-binding domain is found at 7-295 (KGVTVDFPFQ…TKVAQQAELH (289 aa)). 42 to 49 (SPTGTGKT) contacts ATP. [4Fe-4S] cluster-binding residues include Cys-144, Cys-162, Cys-171, and Cys-206. A Nuclear localization signal motif is present at residues 150 to 166 (KKQESNHMQVHLCRRKV). The short motif at 249–252 (DEAH) is the DEAH box element. A Nuclear localization signal motif is present at residues 874-880 (QRGRRRK). Disordered stretches follow at residues 978–1018 (GCSS…ATRQ) and 1140–1172 (GPGT…RKTQ). The PIP-box motif lies at 1172–1179 (QSKISSFL).

This sequence belongs to the helicase family. RAD3/XPD subfamily. Interacts with TERF1. Interacts (via PIP-box) with PCNA; the interaction is direct and essential for suppressing telomere fragility. Interacts with MMS19; the interaction mediates the association of RTEL1 with the cytosolic iron-sulfur protein assembly (CIA) complex. In terms of tissue distribution, highly expressed in adult testis, liver and ovary.

The protein localises to the nucleus. It carries out the reaction ATP + H2O = ADP + phosphate + H(+). A probable ATP-dependent DNA helicase implicated in telomere-length regulation, DNA repair and the maintenance of genomic stability. Acts as an anti-recombinase to counteract toxic recombination and limit crossover during meiosis. Regulates meiotic recombination and crossover homeostasis by physically dissociating strand invasion events and thereby promotes noncrossover repair by meiotic synthesis dependent strand annealing (SDSA) as well as disassembly of D loop recombination intermediates. Also disassembles T loops and prevents telomere fragility by counteracting telomeric G4-DNA structures, which together ensure the dynamics and stability of the telomere. The chain is Regulator of telomere elongation helicase 1 from Bos taurus (Bovine).